Here is a 56-residue protein sequence, read N- to C-terminus: Large ribosomal subunit protein bL32c (56 aa).

This sequence belongs to the bacterial ribosomal protein bL32 family.

It localises to the plastid. It is found in the chloroplast. This is Large ribosomal subunit protein bL32c from Tupiella akineta (Green alga).